The primary structure comprises 352 residues: S-adenosylmethionine:tRNA ribosyltransferase-isomerase (352 aa).

Belongs to the QueA family. As to quaternary structure, monomer.

Its subcellular location is the cytoplasm. The enzyme catalyses 7-aminomethyl-7-carbaguanosine(34) in tRNA + S-adenosyl-L-methionine = epoxyqueuosine(34) in tRNA + adenine + L-methionine + 2 H(+). It participates in tRNA modification; tRNA-queuosine biosynthesis. In terms of biological role, transfers and isomerizes the ribose moiety from AdoMet to the 7-aminomethyl group of 7-deazaguanine (preQ1-tRNA) to give epoxyqueuosine (oQ-tRNA). This is S-adenosylmethionine:tRNA ribosyltransferase-isomerase from Cupriavidus necator (strain ATCC 17699 / DSM 428 / KCTC 22496 / NCIMB 10442 / H16 / Stanier 337) (Ralstonia eutropha).